The following is a 146-amino-acid chain: Monothiol glutaredoxin-5, mitochondrial (146 aa).

Positions 26–131 (RQALEQAVKE…KILKEINALA (106 aa)) constitute a Glutaredoxin domain. Glutathione is bound at residue K43. C51 contacts [2Fe-2S] cluster. Glutathione is bound by residues 83–87 (REGIK), I95, and 108–109 (SD).

Belongs to the glutaredoxin family. Monothiol subfamily. In terms of assembly, homodimer. Interacts with ISA1 and ISA2.

It localises to the mitochondrion. Monothiol glutaredoxin involved in mitochondrial iron-sulfur (Fe/S) cluster transfer. Receives 2Fe/2S clusters from scaffold protein isu1 and mediates their transfer to apoproteins, to the 4Fe/FS cluster biosynthesis machinery, or export from mitochondrion. The protein is Monothiol glutaredoxin-5, mitochondrial of Schizosaccharomyces pombe (strain 972 / ATCC 24843) (Fission yeast).